A 214-amino-acid polypeptide reads, in one-letter code: MNFLLSWVHWTLALLLYLHHAKWSQAAPTTEGEQKAHEVVKFMDVYQRSYCRPIETLVDIFQEYPDEIEYIFKPSCVPLMRCAGCCNDEALECVPTSESNVTMQIMRIKPHQSQHIGEMSFLQHSRCECRPKKDRTKPEKKSVRGKGKGQKRKRKKSRFKSWSVHCEPCSERRKHLFVQDPQTCKCSCKNTDSRCKARQLELNERTCRCDKPRR.

A signal peptide spans methionine 1 to alanine 26. Cystine bridges form between cysteine 51–cysteine 93, cysteine 82–cysteine 127, and cysteine 86–cysteine 129. Asparagine 100 is a glycosylation site (N-linked (GlcNAc...) asparagine). Basic and acidic residues predominate over residues proline 131 to serine 142. The disordered stretch occupies residues proline 131 to phenylalanine 159. Positions valine 143–phenylalanine 159 are enriched in basic residues.

This sequence belongs to the PDGF/VEGF growth factor family. Homodimer; disulfide-linked. Also found as heterodimer with PGF. Interacts with NRP1. Interacts with isoform 2 of BSG. Interacts with CD82; this interaction inhibits VEGFA-mediated signaling pathway. In terms of tissue distribution, expressed in the pituitary, in brain, in particularly in supraoptic and paraventricular nuclei and the choroid plexus. Also found abundantly in the corpus luteum of the ovary and in kidney glomeruli. Expressed in the ductal epithelial cells of post-pubertal mammary glands. Expressed in the ductal and alveolar epithelial cells throughout the whole period of gestational evolution, lactation and involution.

It is found in the secreted. Functionally, growth factor active in angiogenesis, vasculogenesis and endothelial cell growth. Induces endothelial cell proliferation, promotes cell migration, inhibits apoptosis and induces permeabilization of blood vessels. Binds to the FLT1/VEGFR1 and KDR/VEGFR2 receptors, heparan sulfate and heparin. May play a role in increasing vascular permeability during lactation, when increased transport of molecules from the blood is required for efficient milk protein synthesis. Binding to NRP1 receptor initiates a signaling pathway needed for motor neuron axon guidance and cell body migration, including for the caudal migration of facial motor neurons from rhombomere 4 to rhombomere 6 during embryonic development. Also binds the DEAR/FBXW7-AS1 receptor. The chain is Vascular endothelial growth factor A (Vegfa) from Rattus norvegicus (Rat).